Here is a 427-residue protein sequence, read N- to C-terminus: Adenylosuccinate synthetase (427 aa).

GTP contacts are provided by residues 13–19 (GDEGKGK) and 41–43 (GHT). Asp-14 (proton acceptor) is an active-site residue. Mg(2+) is bound by residues Asp-14 and Gly-41. Residues 14 to 17 (DEGK), 39 to 42 (NAGH), Thr-129, Arg-143, Gln-224, Thr-239, and Arg-303 each bind IMP. His-42 acts as the Proton donor in catalysis. The interval 117–137 (QEKQRGEESLGTTKRGIGPAY) is disordered. Residue 299–305 (TTTGRPR) coordinates substrate. GTP-binding positions include Arg-305, 331–333 (KLD), and 414–416 (GTG).

It belongs to the adenylosuccinate synthetase family. Homodimer. Mg(2+) is required as a cofactor.

Its subcellular location is the cytoplasm. It catalyses the reaction IMP + L-aspartate + GTP = N(6)-(1,2-dicarboxyethyl)-AMP + GDP + phosphate + 2 H(+). It participates in purine metabolism; AMP biosynthesis via de novo pathway; AMP from IMP: step 1/2. Its function is as follows. Plays an important role in the de novo pathway of purine nucleotide biosynthesis. Catalyzes the first committed step in the biosynthesis of AMP from IMP. The chain is Adenylosuccinate synthetase from Caldicellulosiruptor saccharolyticus (strain ATCC 43494 / DSM 8903 / Tp8T 6331).